A 344-amino-acid chain; its full sequence is Phosphate acyltransferase (344 aa).

The protein belongs to the PlsX family. As to quaternary structure, homodimer. Probably interacts with PlsY.

Its subcellular location is the cytoplasm. The catalysed reaction is a fatty acyl-[ACP] + phosphate = an acyl phosphate + holo-[ACP]. Its pathway is lipid metabolism; phospholipid metabolism. In terms of biological role, catalyzes the reversible formation of acyl-phosphate (acyl-PO(4)) from acyl-[acyl-carrier-protein] (acyl-ACP). This enzyme utilizes acyl-ACP as fatty acyl donor, but not acyl-CoA. The sequence is that of Phosphate acyltransferase from Cyanothece sp. (strain PCC 7425 / ATCC 29141).